A 572-amino-acid polypeptide reads, in one-letter code: Transmembrane glycoprotein NMB (572 aa).

The N-terminal stretch at 1–22 (MECLYYFLGFLLLAARLPLDAA) is a signal peptide. At 23-498 (KRFHDVLGNE…DPASPLRMAN (476 aa)) the chain is on the extracellular side. Positions 64 to 66 (RGD) match the Cell attachment site motif. 10 N-linked (GlcNAc...) asparagine glycosylation sites follow: Asn93, Asn134, Asn146, Asn200, Asn249, Asn275, Asn296, Asn300, Asn306, and Asn312. Residues 240–327 (VTMFQKNDRN…AAPGPCPPPP (88 aa)) form the PKD domain. The tract at residues 320 to 362 (PGPCPPPPPPPRPSKPTPSLATTLKSYDSNTPGPAGDNPLELS) is disordered. The segment covering 321–335 (GPCPPPPPPPRPSKP) has biased composition (pro residues). Residues 338–351 (SLATTLKSYDSNTP) are compositionally biased toward polar residues. Asn459 and Asn467 each carry an N-linked (GlcNAc...) asparagine glycan. The chain crosses the membrane as a helical span at residues 499–519 (SALISVGCLAIFVTVISLLVY). Residues 520 to 572 (KKHKEYNPIENSPGNVVRSKGLSVFLNRAKAVFFPGNQEKDPLLKNQEFKGVS) are Cytoplasmic-facing. Ser542 is subject to Phosphoserine.

Belongs to the PMEL/NMB family. Widely expressed, but very low expression, if any, in the brain. Expressed in the epidermis with higher levels in melanocytes compared with keratinocytes and Langerhans cells (at protein level). Expressed in peripheral blood, but not bone marrow mononuclear cells. Expressed in tissue macrophages, including liver Kuppfer cells and lung alveolar macrophages, in podocytes and in some cells of the ciliary body of the eye (at protein level). May be overexpressed in various cancers, including melanoma and glioblastoma multiforme.

It localises to the cell membrane. The protein localises to the melanosome membrane. The protein resides in the early endosome membrane. Its function is as follows. Could be a melanogenic enzyme. In Homo sapiens (Human), this protein is Transmembrane glycoprotein NMB (GPNMB).